The following is a 304-amino-acid chain: Aquaglyceroporin-3 (304 aa).

Residues 1-68 (MQSQPDNVAY…LRLNYRDYMG (68 aa)) are Cytoplasmic-facing. Residues 69–89 (ELLGTFVLLFMGNGVVATVII) form a helical membrane-spanning segment. The Extracellular segment spans residues 90-95 (DGKLGF). The helical transmembrane segment at 96–116 (LSITLGWGIAVTMALYVSLGI) threads the bilayer. At 117-142 (SSGHLNPAVTVGNAVFGDFPWRKVPG) the chain is on the cytoplasmic side. A helical transmembrane segment spans residues 143-163 (YIAAQMLGAFLGAACAYGVFA). Residues 164–196 (DLLKAHGGGELIAFGEKGTAGVFSTYPRDSNGL) are Extracellular-facing. The chain crosses the membrane as a helical span at residues 197–217 (FSCIFGEFICTAMLLFCVCGI). The Cytoplasmic segment spans residues 218–231 (FDPNNSPAKGHEPL). A helical membrane pass occupies residues 232–252 (AVGALVFAIGNNIGYSTGYAI). Over 253–277 (NPARDFGPRVFSSFLYGGEVFSHAN) the chain is Extracellular. The chain crosses the membrane as a helical span at residues 278–298 (YYFWVPLVIPLFGGIFGLFLY). Over 299–304 (KYFVPH) the chain is Cytoplasmic.

The protein belongs to the MIP/aquaporin (TC 1.A.8) family.

The protein localises to the cell membrane. The enzyme catalyses glycerol(in) = glycerol(out). It carries out the reaction H2O(in) = H2O(out). The catalysed reaction is urea(in) = urea(out). Functionally, mediates water and glycerol transport across the cell membrane. Permeable to urea. Permeable to methylamine/methylammonium. Permeable to dihydroxyacetone. Permeable to erythritol and ribitol. In Trypanosoma brucei brucei, this protein is Aquaglyceroporin-3.